Consider the following 102-residue polypeptide: Small ribosomal subunit protein uS10 (102 aa).

This sequence belongs to the universal ribosomal protein uS10 family. Part of the 30S ribosomal subunit.

Functionally, involved in the binding of tRNA to the ribosomes. This chain is Small ribosomal subunit protein uS10, found in Methanospirillum hungatei JF-1 (strain ATCC 27890 / DSM 864 / NBRC 100397 / JF-1).